Consider the following 372-residue polypeptide: Queuine tRNA-ribosyltransferase (372 aa).

Catalysis depends on Asp-92, which acts as the Proton acceptor. Substrate is bound by residues 92–96 (DSGGY), Asp-146, Gln-188, and Gly-215. The tract at residues 246-252 (GIGSLRE) is RNA binding. Asp-265 (nucleophile) is an active-site residue. Residues 270–274 (TRLGR) form an RNA binding; important for wobble base 34 recognition region. Zn(2+) is bound by residues Cys-303, Cys-305, Cys-308, and His-334.

The protein belongs to the queuine tRNA-ribosyltransferase family. In terms of assembly, homodimer. Within each dimer, one monomer is responsible for RNA recognition and catalysis, while the other monomer binds to the replacement base PreQ1. The cofactor is Zn(2+).

The enzyme catalyses 7-aminomethyl-7-carbaguanine + guanosine(34) in tRNA = 7-aminomethyl-7-carbaguanosine(34) in tRNA + guanine. It functions in the pathway tRNA modification; tRNA-queuosine biosynthesis. Catalyzes the base-exchange of a guanine (G) residue with the queuine precursor 7-aminomethyl-7-deazaguanine (PreQ1) at position 34 (anticodon wobble position) in tRNAs with GU(N) anticodons (tRNA-Asp, -Asn, -His and -Tyr). Catalysis occurs through a double-displacement mechanism. The nucleophile active site attacks the C1' of nucleotide 34 to detach the guanine base from the RNA, forming a covalent enzyme-RNA intermediate. The proton acceptor active site deprotonates the incoming PreQ1, allowing a nucleophilic attack on the C1' of the ribose to form the product. After dissociation, two additional enzymatic reactions on the tRNA convert PreQ1 to queuine (Q), resulting in the hypermodified nucleoside queuosine (7-(((4,5-cis-dihydroxy-2-cyclopenten-1-yl)amino)methyl)-7-deazaguanosine). This Prochlorococcus marinus subsp. pastoris (strain CCMP1986 / NIES-2087 / MED4) protein is Queuine tRNA-ribosyltransferase.